The sequence spans 178 residues: Large ribosomal subunit protein uL6 (178 aa).

Belongs to the universal ribosomal protein uL6 family. Part of the 50S ribosomal subunit.

In terms of biological role, this protein binds to the 23S rRNA, and is important in its secondary structure. It is located near the subunit interface in the base of the L7/L12 stalk, and near the tRNA binding site of the peptidyltransferase center. The protein is Large ribosomal subunit protein uL6 of Opitutus terrae (strain DSM 11246 / JCM 15787 / PB90-1).